The primary structure comprises 474 residues: Nuclear hormone receptor family member nhr-91 (474 aa).

The tract at residues 50-69 (SMTPSFSQTESPNSETDDST) is disordered. Polar residues predominate over residues 51 to 69 (MTPSFSQTESPNSETDDST). The segment at residues 97 to 172 (SKLCSVCGDK…KGMLTEAVRE (76 aa)) is a DNA-binding region (nuclear receptor). 2 consecutive NR C4-type zinc fingers follow at residues 100 to 120 (CSVC…CEGC) and 136 to 155 (CSQD…CQSC). The NR LBD domain maps to 215 to 474 (SGKKLIKELV…KNPRRLVFDE (260 aa)).

The protein belongs to the nuclear hormone receptor family.

The protein resides in the nucleus. Its function is as follows. Orphan nuclear receptor. In Caenorhabditis elegans, this protein is Nuclear hormone receptor family member nhr-91 (nhr-91).